A 138-amino-acid polypeptide reads, in one-letter code: Fusaristatin A biosynthesis cluster protein FGSG_08206 (138 aa).

The region spanning 33 to 130 is the Stress-response A/B barrel domain; the sequence is VHRVTMFKMP…TIDGMMTVFF (98 aa).

It participates in secondary metabolite biosynthesis. Functionally, part of the gene cluster that mediates the biosynthesis of the lipopeptide fusaristatin A. Fusaristatin A consists of a polyketide chain linked to three amino acid residues glutamine (Gln), dehydroalanine (dehydro-Ala), and beta-aminoisobutyric acid. The biosynthesis starts with formation of a linear polyketide chain by the highly reducing polyketide synthase PKS6. The gene cluster does not contain an acyl-CoA ligase or an acyl-transferase, and it is therefore predicted that the polyketide is transferred directly to the nonribosomal peptide synthetase NRPS7. Modules 1-3 from NRPS7 incorporate dehydro-Ala, Gln, and beta-aminoisobutyric acid in the compound, which is released by cyclization. The beta-aminoisobutyric acid units are most likely not freely available to the NRPS, but can be synthesized from thymine, which requires a dehydrogenase, a monooxygenase, and an aminotransferase. The fusaristatin A cluster contains a cytochrome P450 monooxygenase (FGSG_08207) and an aminotransferase (FGSG_17085), which theoretically can perform two of the enzymatic steps. The enzymes may however also be involved in biosynthesis of dehydroalanine or modification of the polyketide. The dehydro-Ala residue can be a result of cyclization, where serine is dehydrated. The last gene of the cluster encodes a protein with an A/B barrel domain found in variable enzymes, which hampers functional prediction. This Gibberella zeae (strain ATCC MYA-4620 / CBS 123657 / FGSC 9075 / NRRL 31084 / PH-1) (Wheat head blight fungus) protein is Fusaristatin A biosynthesis cluster protein FGSG_08206.